We begin with the raw amino-acid sequence, 531 residues long: Membrane protein insertase YidC (531 aa).

Transmembrane regions (helical) follow at residues 5–25 (ALIA…LFSP), 343–363 (GNYG…FYPL), 415–435 (LPML…MFSI), and 489–509 (PVVF…YWLV).

Belongs to the OXA1/ALB3/YidC family. Type 1 subfamily. Interacts with the Sec translocase complex via SecD. Specifically interacts with transmembrane segments of nascent integral membrane proteins during membrane integration.

It is found in the cell inner membrane. Its function is as follows. Required for the insertion and/or proper folding and/or complex formation of integral membrane proteins into the membrane. Involved in integration of membrane proteins that insert both dependently and independently of the Sec translocase complex, as well as at least some lipoproteins. Aids folding of multispanning membrane proteins. The polypeptide is Membrane protein insertase YidC (Geobacter sulfurreducens (strain ATCC 51573 / DSM 12127 / PCA)).